Consider the following 102-residue polypeptide: uncharacterized protein (102 aa).

Residues 36–55 (IISLLAIFIKMCLWLWKQFL) traverse the membrane as a helical segment.

The protein localises to the membrane. This is an uncharacterized protein from Homo sapiens (Human).